The chain runs to 167 residues: Translationally-controlled tumor protein homolog (167 aa).

The region spanning 1 to 167 (MIIYKDIFSG…WKHGIDEEKI (167 aa)) is the TCTP domain.

The protein belongs to the TCTP family.

It is found in the cytoplasm. The protein localises to the cytoskeleton. Involved in protein synthesis. Involved in microtubule stabilization. This chain is Translationally-controlled tumor protein homolog, found in Candida glabrata (strain ATCC 2001 / BCRC 20586 / JCM 3761 / NBRC 0622 / NRRL Y-65 / CBS 138) (Yeast).